We begin with the raw amino-acid sequence, 151 residues long: U1 small nuclear ribonucleoprotein C (151 aa).

The segment at 4-36 adopts a Matrin-type zinc-finger fold; that stretch reads FYCEYCSIYLTHSSPAGRKQHSQGRKHISAKVE.

It belongs to the U1 small nuclear ribonucleoprotein C family. U1 snRNP is composed of the 7 core Sm proteins B/B', D1, D2, D3, E, F and G that assemble in a heptameric protein ring on the Sm site of the small nuclear RNA to form the core snRNP, and at least 3 U1 snRNP-specific proteins U1-70K, U1-A and U1-C. U1-C interacts with U1 snRNA and the 5' splice-site region of the pre-mRNA.

It localises to the nucleus. Its function is as follows. Component of the spliceosomal U1 snRNP, which is essential for recognition of the pre-mRNA 5' splice-site and the subsequent assembly of the spliceosome. U1-C is directly involved in initial 5' splice-site recognition for both constitutive and regulated alternative splicing. The interaction with the 5' splice-site seems to precede base-pairing between the pre-mRNA and the U1 snRNA. Stimulates commitment or early (E) complex formation by stabilizing the base pairing of the 5' end of the U1 snRNA and the 5' splice-site region. The sequence is that of U1 small nuclear ribonucleoprotein C from Theileria annulata.